The primary structure comprises 88 residues: Large ribosomal subunit protein bL31B (88 aa).

It belongs to the bacterial ribosomal protein bL31 family. Type B subfamily. In terms of assembly, part of the 50S ribosomal subunit.

This Bordetella bronchiseptica (strain ATCC BAA-588 / NCTC 13252 / RB50) (Alcaligenes bronchisepticus) protein is Large ribosomal subunit protein bL31B.